The primary structure comprises 312 residues: DNA-directed RNA polymerase subunit alpha (312 aa).

The alpha N-terminal domain (alpha-NTD) stretch occupies residues 1-226 (MIEFEKPIIT…EHLNLFTDLT (226 aa)). The alpha C-terminal domain (alpha-CTD) stretch occupies residues 243 to 312 (DEKVLDRTIE…DLGLGLKNDK (70 aa)).

Belongs to the RNA polymerase alpha chain family. In terms of assembly, homodimer. The RNAP catalytic core consists of 2 alpha, 1 beta, 1 beta' and 1 omega subunit. When a sigma factor is associated with the core the holoenzyme is formed, which can initiate transcription.

The enzyme catalyses RNA(n) + a ribonucleoside 5'-triphosphate = RNA(n+1) + diphosphate. Its function is as follows. DNA-dependent RNA polymerase catalyzes the transcription of DNA into RNA using the four ribonucleoside triphosphates as substrates. This is DNA-directed RNA polymerase subunit alpha from Streptococcus agalactiae serotype III (strain NEM316).